The sequence spans 96 residues: MQFAKIASVLAMAAAAVAAPAPGNYEVEPRTGGSNNGNNQPACSAQSSNVCCNGLGCLVQILGAGCSTKSYCCQSDAPLAVGALVNVNALNCVQVL.

Residues 1-18 (MQFAKIASVLAMAAAAVA) form the signal peptide. Intrachain disulfides connect Cys-43–Cys-72, Cys-51–Cys-66, Cys-52–Cys-57, and Cys-73–Cys-92.

It belongs to the fungal hydrophobin family.

The protein resides in the secreted. The protein localises to the cell wall. In terms of biological role, aerial growth, conidiation, and dispersal of filamentous fungi in the environment rely upon a capability of their secreting small amphipathic proteins called hydrophobins (HPBs) with low sequence identity. Class I can self-assemble into an outermost layer of rodlet bundles on aerial cell surfaces, conferring cellular hydrophobicity that supports fungal growth, development and dispersal; whereas Class II form highly ordered films at water-air interfaces through intermolecular interactions but contribute nothing to the rodlet structure. Does not seem to be important for the ability to cause seedling disease. The protein is Class I hydrophobin 3 of Gibberella moniliformis (Maize ear and stalk rot fungus).